We begin with the raw amino-acid sequence, 218 residues long: Ras-related protein Rab-4A (218 aa).

The GDP site is built by Gly-23, Thr-24, Gly-25, Lys-26, Ser-27, and Cys-28. Positions 23, 24, 25, 26, 27, 28, 42, 44, and 45 each coordinate GTP. A Mg(2+)-binding site is contributed by Ser-27. The Switch 1 motif lies at 44–49 (HTIGVE). Positions 45 and 68 each coordinate Mg(2+). The Switch 2 signature appears at 70-79 (AGQERFRSVT). Gly-71 provides a ligand contact to GTP. 5-glutamyl serotonin is present on Gln-72. The GDP site is built by Asn-126, Lys-127, Asp-129, Ala-157, and Leu-158. Residues Asn-126, Lys-127, Asp-129, Ala-157, and Leu-158 each coordinate GTP. At Ser-190 the chain carries Phosphoserine. Position 204 is a phosphoserine; by CDK1 (Ser-204). S-geranylgeranyl cysteine attachment occurs at residues Cys-216 and Cys-218. Cys-218 is subject to Cysteine methyl ester.

This sequence belongs to the small GTPase superfamily. Rab family. As to quaternary structure, interacts with SGSM1, SGSM2 and SGSM3. Interacts with RAB11FIP1, RABEP1, ZFYVE20 and RUFY1. Interacts (membrane-bound form) with NDRG1; the interaction involves NDRG1 in vesicular recycling of E-cadherin. Interacts (in GTP-bound form) with GRIPAP1 (via N-terminus). Interacts with RABEP1 and RBSN. Does not interact with HPS4. Interacts with RABEP2; this interaction may mediate VEGFR2 cell surface expression. Mg(2+) serves as cofactor. Post-translationally, phosphorylated by CDK1 kinase during mitosis. Serotonylation of Gln-72 by TGM2 during activation and aggregation of platelets leads to constitutive activation of GTPase activity.

The protein localises to the membrane. It is found in the cytoplasm. The protein resides in the early endosome membrane. Its subcellular location is the recycling endosome membrane. The catalysed reaction is GTP + H2O = GDP + phosphate + H(+). With respect to regulation, regulated by guanine nucleotide exchange factors (GEFs) which promote the exchange of bound GDP for free GTP. Regulated by GTPase activating proteins (GAPs) which increase the GTP hydrolysis activity. Inhibited by GDP dissociation inhibitors (GDIs). In terms of biological role, the small GTPases Rab are key regulators of intracellular membrane trafficking, from the formation of transport vesicles to their fusion with membranes. Rabs cycle between an inactive GDP-bound form and an active GTP-bound form that is able to recruit to membranes different sets of downstream effectors directly responsible for vesicle formation, movement, tethering and fusion. RAB4A is involved in protein transport. Also plays a role in vesicular traffic. Mediates VEGFR2 endosomal trafficking to enhance VEGFR2 signaling. Acts as a regulator of platelet alpha-granule release during activation and aggregation of platelets. This is Ras-related protein Rab-4A from Homo sapiens (Human).